The following is a 116-amino-acid chain: NADH dehydrogenase [ubiquinone] 1 alpha subcomplex subunit 5 (116 aa).

N-acetylalanine is present on alanine 2. N6-acetyllysine occurs at positions 30, 46, and 60. Position 89 is a phosphoserine (serine 89). Lysine 98 is modified (N6-acetyllysine; alternate). Lysine 98 carries the N6-succinyllysine; alternate modification.

Belongs to the complex I NDUFA5 subunit family. As to quaternary structure, complex I is composed of 45 different subunits.

It localises to the mitochondrion inner membrane. Functionally, accessory subunit of the mitochondrial membrane respiratory chain NADH dehydrogenase (Complex I), that is believed not to be involved in catalysis. Complex I functions in the transfer of electrons from NADH to the respiratory chain. The immediate electron acceptor for the enzyme is believed to be ubiquinone. This is NADH dehydrogenase [ubiquinone] 1 alpha subcomplex subunit 5 (Ndufa5) from Rattus norvegicus (Rat).